The chain runs to 78 residues: Probable [Fe-S]-dependent transcriptional repressor (78 aa).

Iron-sulfur cluster-binding residues include Cys-56, Cys-61, Cys-64, and Cys-70.

This sequence belongs to the FeoC family.

May function as a transcriptional regulator that controls feoABC expression. The chain is Probable [Fe-S]-dependent transcriptional repressor from Escherichia fergusonii (strain ATCC 35469 / DSM 13698 / CCUG 18766 / IAM 14443 / JCM 21226 / LMG 7866 / NBRC 102419 / NCTC 12128 / CDC 0568-73).